Consider the following 159-residue polypeptide: Phosphopantetheine adenylyltransferase (159 aa).

Ser9 serves as a coordination point for substrate. Residues Ser9 to Phe10 and His17 contribute to the ATP site. Residues Lys41, Ile73, and Lys87 each coordinate substrate. ATP is bound by residues Gly88–Arg90, Glu98, and Trp122–Ser128.

This sequence belongs to the bacterial CoaD family. As to quaternary structure, homohexamer. The cofactor is Mg(2+).

Its subcellular location is the cytoplasm. The enzyme catalyses (R)-4'-phosphopantetheine + ATP + H(+) = 3'-dephospho-CoA + diphosphate. It participates in cofactor biosynthesis; coenzyme A biosynthesis; CoA from (R)-pantothenate: step 4/5. Functionally, reversibly transfers an adenylyl group from ATP to 4'-phosphopantetheine, yielding dephospho-CoA (dPCoA) and pyrophosphate. The sequence is that of Phosphopantetheine adenylyltransferase from Nocardioides sp. (strain ATCC BAA-499 / JS614).